The chain runs to 854 residues: Probable inactive serine/threonine-protein kinase DDB_G0274821 (854 aa).

In terms of domain architecture, Protein kinase spans M1–F266. N-linked (GlcNAc...) asparagine glycans are attached at residues N32 and N106. The interval N116–N135 is disordered. N163, N279, N283, and N290 each carry an N-linked (GlcNAc...) asparagine glycan. A disordered region spans residues L289 to L331. Low complexity predominate over residues S292–Q322. N-linked (GlcNAc...) asparagine glycans are attached at residues N325, N347, and N365. The interval I384 to S408 is disordered. N-linked (GlcNAc...) asparagine glycosylation is present at N414. The interval N425–N446 is disordered. N520, N541, and N620 each carry an N-linked (GlcNAc...) asparagine glycan. The segment at S627–L650 is disordered. A compositionally biased stretch (low complexity) spans S633–L650. An N-linked (GlcNAc...) asparagine glycan is attached at N757. A helical membrane pass occupies residues H770–I792.

It belongs to the protein kinase superfamily. Ser/Thr protein kinase family.

Its subcellular location is the membrane. In Dictyostelium discoideum (Social amoeba), this protein is Probable inactive serine/threonine-protein kinase DDB_G0274821.